Consider the following 415-residue polypeptide: Histidine--tRNA ligase (415 aa).

Belongs to the class-II aminoacyl-tRNA synthetase family. Homodimer.

It localises to the cytoplasm. It catalyses the reaction tRNA(His) + L-histidine + ATP = L-histidyl-tRNA(His) + AMP + diphosphate + H(+). This chain is Histidine--tRNA ligase, found in Clostridium botulinum (strain Loch Maree / Type A3).